Here is a 235-residue protein sequence, read N- to C-terminus: BPI fold-containing family A member 2 (235 aa).

A signal peptide spans 1–20; that stretch reads MFQLGSLVVLCGLLIGTSES. Cys161 and Cys204 are joined by a disulfide.

The protein belongs to the BPI/LBP/Plunc superfamily. Plunc family. In terms of tissue distribution, expressed in parotid, submandibular and sublingual glands.

The protein resides in the secreted. In terms of biological role, has strong antibacterial activity against P.aeruginosa. The protein is BPI fold-containing family A member 2 (Bpifa2) of Rattus norvegicus (Rat).